Here is a 77-residue protein sequence, read N- to C-terminus: Exodeoxyribonuclease 7 small subunit (77 aa).

Belongs to the XseB family. As to quaternary structure, heterooligomer composed of large and small subunits.

The protein resides in the cytoplasm. The catalysed reaction is Exonucleolytic cleavage in either 5'- to 3'- or 3'- to 5'-direction to yield nucleoside 5'-phosphates.. Its function is as follows. Bidirectionally degrades single-stranded DNA into large acid-insoluble oligonucleotides, which are then degraded further into small acid-soluble oligonucleotides. The polypeptide is Exodeoxyribonuclease 7 small subunit (Chromobacterium violaceum (strain ATCC 12472 / DSM 30191 / JCM 1249 / CCUG 213 / NBRC 12614 / NCIMB 9131 / NCTC 9757 / MK)).